A 523-amino-acid polypeptide reads, in one-letter code: Peptide chain release factor 3 (523 aa).

The 268-residue stretch at 10–277 folds into the tr-type G domain; it reads NKRRTFAIIS…QFVDLAPAPG (268 aa). GTP contacts are provided by residues 19–26, 87–91, and 141–144; these read SHPDAGKT, DTPGH, and NKLD.

The protein belongs to the TRAFAC class translation factor GTPase superfamily. Classic translation factor GTPase family. PrfC subfamily.

The protein localises to the cytoplasm. Increases the formation of ribosomal termination complexes and stimulates activities of RF-1 and RF-2. It binds guanine nucleotides and has strong preference for UGA stop codons. It may interact directly with the ribosome. The stimulation of RF-1 and RF-2 is significantly reduced by GTP and GDP, but not by GMP. In Lactobacillus delbrueckii subsp. bulgaricus (strain ATCC BAA-365 / Lb-18), this protein is Peptide chain release factor 3.